The primary structure comprises 2345 residues: Nonribisomal peptide synthetase malG (2345 aa).

Positions 226-620 (FSEQAKKNPT…VGRMGTVVKV (395 aa)) are adenylation 1. Positions 766 to 839 (TENETLLRLL…EAAGTMISAG (74 aa)) constitute a Carrier 1 domain. Ser800 is subject to O-(pantetheine 4'-phosphoryl)serine. A condensation 1 region spans residues 877–1292 (EEIYPSTPLQ…LLCPSDKSKL (416 aa)). The adenylation 2 stretch occupies residues 1317 to 1707 (VRSERTAVSA…GRKNREVKLR (391 aa)). One can recognise a Carrier 2 domain in the interval 1843 to 1926 (QPHESTALFV…DIARLIEGVK (84 aa)). At Ser1885 the chain carries O-(pantetheine 4'-phosphoryl)serine. The reductase (R) domain stretch occupies residues 1969 to 2256 (GMSVFLTGGT…PRQLNALQSE (288 aa)).

The protein belongs to the NRP synthetase family.

It carries out the reaction L-proline + L-tryptophan + 2 ATP + NADPH = (S)-3-(indol-3-ylmethyl)-6,7,8,8a-tetrahydropyrrolo[1,2-a]pyrazin-1-one + 2 AMP + 2 diphosphate + NADP(+) + H2O + H(+). In terms of biological role, nonribisomal peptide synthetase; part of the gene cluster that mediates the biosynthesis of malbrancheamide, a dichlorinated fungal indole alkaloid that belongs to a family of natural products containing a characteristic bicyclo[2.2.2]diazaoctane core. The first step of malbrancheamide biosynthesis involves coupling of L-proline and L-tryptophan by malG, a bimodular NRPS, to produce L-Pro-L-Trp aldehyde through reductive offloading. This compound undergoes spontaneous cyclization and dehydration to give a dienamine which is reverse prenylated at C-2 by malE. The other prenyltransferase present in the cluster, malB, displays modest activity, suggesting that may be a redundant gene in the pathway. Subsequently, a [4+2] Diels-Alder cyclo-addition catalyzed by the bifunctional enzyme malC forms the characteristic bicyclo[2.2.2]diazaoctane ring of premalbrancheamid. Finally, the flavin-dependent halogenase malA catalyzes the iterative dichlorination of the indole ring of premalbrancheamide to yield C-9 monochlorinated malbrancheamide B, C-8 monochlorinated isomalbrancheamide B, and dichlorinated malbrancheamide. MalA is also able to brominate premalbrancheamide at C-9 to yield malbrancheamide C, and, to a lesser extend, at C-8 to yield isomalbrancheamide C. Finally, malA can brominate C-9 monochlorinated malbrancheamide B at C-8 to yield malbrancheamide D, or C-8 monochlorinated isomalbrancheamide B at C-9 to produce isomalbrancheamide D. The protein is Nonribisomal peptide synthetase malG of Malbranchea aurantiaca.